Consider the following 79-residue polypeptide: U24-theraphotoxin-Cg1a (79 aa).

An N-terminal signal peptide occupies residues 1-19; it reads MRVLFIIAVLALISVGCYA. Positions 20–44 are excised as a propeptide; sequence SEMKDRSSRNEVLSAIFAIEEPQER. 3 disulfide bridges follow: Cys46–Cys61, Cys53–Cys66, and Cys60–Cys73. Position 78 is a tryptophan amide (Trp78).

This sequence belongs to the neurotoxin 10 (Hwtx-1) family. 35 (Jztx-27) subfamily. Expressed by the venom gland.

Its subcellular location is the secreted. Probable ion channel inhibitor. This Chilobrachys guangxiensis (Chinese earth tiger tarantula) protein is U24-theraphotoxin-Cg1a.